The sequence spans 202 residues: Lipid A acyltransferase PagP (202 aa).

Residues 1–25 (MNYKDIINACILSGVFLLHSPSALA) form the signal peptide. Residues H74, D117, and S118 contribute to the active site.

Belongs to the lipid A palmitoyltransferase family. Homodimer.

The protein resides in the cell outer membrane. The catalysed reaction is a lipid A + a 1,2-diacyl-sn-glycero-3-phosphocholine = a hepta-acyl lipid A + a 2-acyl-sn-glycero-3-phosphocholine. It catalyses the reaction a lipid IVA + a 1,2-diacyl-sn-glycero-3-phosphocholine = a lipid IVB + a 2-acyl-sn-glycero-3-phosphocholine. It carries out the reaction a lipid IIA + a 1,2-diacyl-sn-glycero-3-phosphocholine = a lipid IIB + a 2-acyl-sn-glycero-3-phosphocholine. Functionally, transfers a fatty acid residue from the sn-1 position of a phospholipid to the N-linked hydroxyfatty acid chain on the proximal unit of lipid A or its precursors. This is Lipid A acyltransferase PagP from Yersinia pseudotuberculosis serotype IB (strain PB1/+).